Reading from the N-terminus, the 801-residue chain is Na(+)/H(+) antiporter subunit A1 (801 aa).

A run of 21 helical transmembrane segments spans residues 4-25, 30-49, 79-101, 108-127, 131-153, 166-188, 208-230, 243-265, 270-289, 302-324, 339-361, 373-395, 429-451, 472-494, 526-548, 589-611, 621-641, 646-668, 672-694, 707-729, and 767-784; these read LHIAVILPLIFALIIPILYRFF, LGWFVLSVPIVIFIYMLTLI, LGLLFSLLISGIGSLVVLYSIGY, LGNFYCYLLLFMGAMLGVVL, VIILYLFWELTSFSSFLLISFWR, LIITVFGGLSLLGGIILLAIPTQ, FIFAMILIMIGAFTKSAQFPFYI, SAYLHSATMVKAGLYLIARMTPI, QGWVWTVTLVGLITLFWASL, AFSTVSQLGMIMAMLGIGAISYH, AAIFHLINHATFKGALFMITGAV, LGGLLTIMPISFTITVITALSMA, YLFPIIGIVGSVFTFVYSIKFIM, ILMLLSPAILATLVIVFGLFPGI, AFLSTLVIYILGILLIVTFSYWV, NNLVIIFGALILLTFVTIFSVPF, IRIFEVCIVILLLSAAFLILF, LFSIIMLSAVGYAVSVLFIFFKA, ALTQFVVESISTALFLLCFYHLP, LTNALIAGGVGLSVIIIGLIAYG, and LFESSVLGIAGLAVYTMI.

This sequence belongs to the CPA3 antiporters (TC 2.A.63) subunit A family. May form a heterooligomeric complex that consists of seven subunits: mnhA1, mnhB1, mnhC1, mnhD1, mnhE1, mnhF1 and mnhG1.

It localises to the cell membrane. Na(+) extrusion is completely inhibited by the H(+) conductor carbonyl cyanide m-chlorophenylhydrazone (CCCP). Mnh complex is a Na(+)Li(+)/H(+) antiporter involved in Na(+) and/or Li(+) excretion. Na(+)/H(+) antiport consumes a transmembrane electrical potential, and is thus inferred to be electrogenic. Does not transport K(+), Ca(2+) or Mg(2+). This is Na(+)/H(+) antiporter subunit A1 (mnhA1) from Staphylococcus aureus.